The primary structure comprises 1073 residues: ATP-dependent helicase/deoxyribonuclease subunit B (1073 aa).

The protein belongs to the helicase family. AddB/RexB type 2 subfamily. As to quaternary structure, heterodimer of AddA and RexB. It depends on Mg(2+) as a cofactor.

The heterodimer acts as both an ATP-dependent DNA helicase and an ATP-dependent, dual-direction single-stranded exonuclease. Recognizes the chi site generating a DNA molecule suitable for the initiation of homologous recombination. This subunit has 5' -&gt; 3' nuclease activity but not helicase activity. This Streptococcus equi subsp. zooepidemicus (strain MGCS10565) protein is ATP-dependent helicase/deoxyribonuclease subunit B.